The following is a 180-amino-acid chain: CASP-like protein 5A1 (180 aa).

Topologically, residues 1–36 (MEVSHPAVHPVAVPPVLTEPPARVRMKDYQGMPGTL) are cytoplasmic. The helical transmembrane segment at 37-57 (GGLALRLGQLGFAVLSFSIMV) threads the bilayer. Residues 58–67 (STPDFSQVTA) lie on the Extracellular side of the membrane. A helical transmembrane segment spans residues 68 to 88 (FCYLVAATVLQTLWSSITAVV). Over 89 to 102 (DIYALSVRRSLHHS) the chain is Cytoplasmic. A helical membrane pass occupies residues 103–123 (LLVGLFAVGDGVTSTLTFAAA). Residues 124-150 (CATAGITVLIDNDLDECGQNHCGRFEA) lie on the Extracellular side of the membrane. Residues 151-171 (AAAMAFLSWIMAAPSFLLAFW) traverse the membrane as a helical segment. Over 172 to 180 (SFGNKIVCF) the chain is Cytoplasmic.

It belongs to the Casparian strip membrane proteins (CASP) family. Homodimer and heterodimers.

It is found in the cell membrane. The polypeptide is CASP-like protein 5A1 (Pteridium aquilinum subsp. aquilinum (Bracken fern)).